The following is a 503-amino-acid chain: Probable cytosol aminopeptidase (503 aa).

Residues K274 and D279 each contribute to the Mn(2+) site. K286 is a catalytic residue. 3 residues coordinate Mn(2+): D297, D356, and E358. R360 is an active-site residue.

The protein belongs to the peptidase M17 family. Requires Mn(2+) as cofactor.

The protein localises to the cytoplasm. It carries out the reaction Release of an N-terminal amino acid, Xaa-|-Yaa-, in which Xaa is preferably Leu, but may be other amino acids including Pro although not Arg or Lys, and Yaa may be Pro. Amino acid amides and methyl esters are also readily hydrolyzed, but rates on arylamides are exceedingly low.. It catalyses the reaction Release of an N-terminal amino acid, preferentially leucine, but not glutamic or aspartic acids.. Its function is as follows. Presumably involved in the processing and regular turnover of intracellular proteins. Catalyzes the removal of unsubstituted N-terminal amino acids from various peptides. The chain is Probable cytosol aminopeptidase from Burkholderia ambifaria (strain MC40-6).